The primary structure comprises 592 residues: Bifunctional enzyme BirA/CoaX (592 aa).

The segment at 1-329 (MTVLKLSHWR…ISLRSDDRPV (329 aa)) is biotin--protein ligase. Residues 83–259 (QTALKHECAS…ELDAVLLQYA (177 aa)) enclose the BPL/LPL catalytic domain. The tract at residues 336 to 592 (DSERFLLLDG…AAEGREYEHI (257 aa)) is type III pantothenate kinase. 344-351 (DGGNSRLK) contributes to the ATP binding site. Substrate-binding positions include tyrosine 426 and 433–436 (GSDR). Residue aspartate 435 is the Proton acceptor of the active site. ATP is bound at residue threonine 458. A substrate-binding site is contributed by threonine 508.

The protein in the N-terminal section; belongs to the biotin--protein ligase family. This sequence in the C-terminal section; belongs to the type III pantothenate kinase family. NH4(+) is required as a cofactor. K(+) serves as cofactor.

The protein localises to the cytoplasm. It catalyses the reaction biotin + L-lysyl-[protein] + ATP = N(6)-biotinyl-L-lysyl-[protein] + AMP + diphosphate + H(+). The catalysed reaction is (R)-pantothenate + ATP = (R)-4'-phosphopantothenate + ADP + H(+). It participates in cofactor biosynthesis; coenzyme A biosynthesis; CoA from (R)-pantothenate: step 1/5. Functionally, activates biotin to form biotinyl-5'-adenylate and transfers the biotin moiety to biotin-accepting proteins. In terms of biological role, catalyzes the phosphorylation of pantothenate (Pan), the first step in CoA biosynthesis. In Neisseria meningitidis serogroup B (strain ATCC BAA-335 / MC58), this protein is Bifunctional enzyme BirA/CoaX (birA/coaX).